The following is a 307-amino-acid chain: Homoserine O-acetyltransferase (307 aa).

The Acyl-thioester intermediate role is filled by cysteine 142. Lysine 163 and serine 192 together coordinate substrate. Histidine 235 functions as the Proton acceptor in the catalytic mechanism. The active site involves glutamate 237. Arginine 249 contacts substrate.

Belongs to the MetA family.

The protein resides in the cytoplasm. The enzyme catalyses L-homoserine + acetyl-CoA = O-acetyl-L-homoserine + CoA. It functions in the pathway amino-acid biosynthesis; L-methionine biosynthesis via de novo pathway; O-acetyl-L-homoserine from L-homoserine: step 1/1. Its function is as follows. Transfers an acetyl group from acetyl-CoA to L-homoserine, forming acetyl-L-homoserine. This is Homoserine O-acetyltransferase from Rhizobium johnstonii (strain DSM 114642 / LMG 32736 / 3841) (Rhizobium leguminosarum bv. viciae).